Here is a 397-residue protein sequence, read N- to C-terminus: ATP-dependent RNA helicase eIF4A (397 aa).

The Q motif signature appears at tyrosine 23 to glutamine 51. A Helicase ATP-binding domain is found at isoleucine 54–isoleucine 224. Position 67–74 (alanine 67–threonine 74) interacts with ATP. The DEAD box motif lies at aspartate 172–aspartate 175. A Helicase C-terminal domain is found at glycine 235–phenylalanine 396.

It belongs to the DEAD box helicase family. eIF4A subfamily. As to quaternary structure, component of the eIF4F complex, which composition varies with external and internal environmental conditions. It is composed of at least eIF4A, eIF4E and eIF4G.

The protein resides in the cytoplasm. The enzyme catalyses ATP + H2O = ADP + phosphate + H(+). Its function is as follows. ATP-dependent RNA helicase which is a subunit of the eIF4F complex involved in cap recognition and is required for mRNA binding to ribosome. In the current model of translation initiation, eIF4A unwinds RNA secondary structures in the 5'-UTR of mRNAs which is necessary to allow efficient binding of the small ribosomal subunit, and subsequent scanning for the initiator codon. The protein is ATP-dependent RNA helicase eIF4A (TIF1) of Debaryomyces hansenii (strain ATCC 36239 / CBS 767 / BCRC 21394 / JCM 1990 / NBRC 0083 / IGC 2968) (Yeast).